Reading from the N-terminus, the 43-residue chain is Potassium channel toxin gamma-KTx 4.13 (43 aa).

Cystine bridges form between cysteine 5–cysteine 23, cysteine 11–cysteine 34, cysteine 20–cysteine 39, and cysteine 24–cysteine 41.

Belongs to the ergtoxin family. Gamma-KTx 4 subfamily. As to expression, expressed by the venom gland.

The protein resides in the secreted. In terms of biological role, reversibly blocks Kv11/ERG potassium channels. In Centruroides noxius (Mexican scorpion), this protein is Potassium channel toxin gamma-KTx 4.13.